The chain runs to 248 residues: Large ribosomal subunit protein uL4 (248 aa).

2 disordered regions span residues 72-103 (RSEN…KSLN) and 173-210 (GRSV…RNLS). Positions 92 to 103 (PKAEKDQTKSLN) are enriched in basic and acidic residues. Over residues 177 to 189 (RAGRGKTRGRKYS) the composition is skewed to basic residues.

It belongs to the universal ribosomal protein uL4 family. Part of the 50S ribosomal subunit.

One of the primary rRNA binding proteins, this protein initially binds near the 5'-end of the 23S rRNA. It is important during the early stages of 50S assembly. It makes multiple contacts with different domains of the 23S rRNA in the assembled 50S subunit and ribosome. In terms of biological role, forms part of the polypeptide exit tunnel. This Halorubrum lacusprofundi (strain ATCC 49239 / DSM 5036 / JCM 8891 / ACAM 34) protein is Large ribosomal subunit protein uL4.